We begin with the raw amino-acid sequence, 333 residues long: Meiotic recombination protein rec24 (333 aa).

This sequence belongs to the MEI4L family. As to quaternary structure, interacts with Rec7, as part of the meiotic recombination initiation complex.

It is found in the cytoplasm. The protein resides in the nucleus. Its function is as follows. Required for correct meiotic chromosome segregation and recombination. Accessory protein required for Rec12 activity, which is involved in formation of the double-strand breaks (DSBs) that initiate meiotic recombination. The sequence is that of Meiotic recombination protein rec24 (rec24) from Schizosaccharomyces pombe (strain 972 / ATCC 24843) (Fission yeast).